A 488-amino-acid polypeptide reads, in one-letter code: Ribulose bisphosphate carboxylase large chain (488 aa).

The substrate site is built by Asn-127 and Thr-177. The active-site Proton acceptor is Lys-179. Residue Lys-181 participates in substrate binding. Residues Lys-205, Asp-207, and Glu-208 each contribute to the Mg(2+) site. Lys-205 is subject to N6-carboxylysine. Catalysis depends on His-297, which acts as the Proton acceptor. Positions 298, 330, and 382 each coordinate substrate.

The protein belongs to the RuBisCO large chain family. Type I subfamily. As to quaternary structure, heterohexadecamer of 8 large chains and 8 small chains. It depends on Mg(2+) as a cofactor.

It is found in the plastid. It localises to the chloroplast. It catalyses the reaction 2 (2R)-3-phosphoglycerate + 2 H(+) = D-ribulose 1,5-bisphosphate + CO2 + H2O. The enzyme catalyses D-ribulose 1,5-bisphosphate + O2 = 2-phosphoglycolate + (2R)-3-phosphoglycerate + 2 H(+). RuBisCO catalyzes two reactions: the carboxylation of D-ribulose 1,5-bisphosphate, the primary event in carbon dioxide fixation, as well as the oxidative fragmentation of the pentose substrate in the photorespiration process. Both reactions occur simultaneously and in competition at the same active site. The chain is Ribulose bisphosphate carboxylase large chain from Emiliania huxleyi (Coccolithophore).